A 459-amino-acid chain; its full sequence is C-type lectin domain family 14 member A (459 aa).

The first 21 residues, 1-21 (MRPALALCLLCPAFWPRPGNG), serve as a signal peptide directing secretion. Over 22 to 386 (EHPTADRAAC…VSLTFDTSST (365 aa)) the chain is Extracellular. In terms of domain architecture, C-type lectin spans 33 to 173 (ASGACYSLHH…LRTDGYLCKY (141 aa)). Cys-143 and Cys-162 are joined by a disulfide. Asn-189 carries an N-linked (GlcNAc...) asparagine glycan. In terms of domain architecture, EGF-like spans 246-288 (PCSGRYLLAGKCVELPDCLDHLGDFTCECAVGFELGKDGRSCE). N-linked (GlcNAc...) asparagine glycans are attached at residues Asn-306, Asn-317, and Asn-370. The helical transmembrane segment at 387 to 407 (VVFILVSIAVIVLVVLTITVL) threads the bilayer. The Cytoplasmic segment spans residues 408–459 (GLFKLCFHKSRSSRTGKGALDSPGVECDAEATSLHHSSTQCTDIGVKSGTVA). Ser-440 bears the Phosphoserine mark.

It is found in the membrane. In Mus musculus (Mouse), this protein is C-type lectin domain family 14 member A (Clec14a).